The sequence spans 1253 residues: Methionine synthase (1253 aa).

Positions 6–326 (QDEIEAILRK…DHIREIAEAV (321 aa)) constitute a Hcy-binding domain. Residues C248, C311, and C312 each coordinate Zn(2+). The region spanning 359–620 (FVNIGERCNV…IHKDLLQLCE (262 aa)) is the Pterin-binding domain. Residues 370-372 (GSR), D437, N458, D525, N567, R573, and R579 contribute to the (6S)-5,6,7,8-tetrahydrofolate site. The B12-binding N-terminal domain maps to 650 to 747 (QTDEWRNGSI…FMEKEREEAR (98 aa)). Methylcob(III)alamin is bound by residues E697, 770-774 (GDVHD), H773, S818, T822, and A874. Residues 760 to 895 (QGTIVLATVK…DENLRDDYFE (136 aa)) form the B12-binding domain. An AdoMet activation domain is found at 911–1253 (SLKERKYVPL…LGPILGYDTD (343 aa)). Residues D962, R1160, and 1215-1216 (YF) contribute to the S-adenosyl-L-methionine site. Residue T1252 is modified to Phosphothreonine.

This sequence belongs to the vitamin-B12 dependent methionine synthase family. In terms of assembly, monomer. Dimer. Forms a multiprotein complex with MMACHC, MMADHC and MTRR. The cofactor is methylcob(III)alamin. Zn(2+) is required as a cofactor.

Its subcellular location is the cytoplasm. The enzyme catalyses (6S)-5-methyl-5,6,7,8-tetrahydrofolate + L-homocysteine = (6S)-5,6,7,8-tetrahydrofolate + L-methionine. It participates in amino-acid biosynthesis; L-methionine biosynthesis via de novo pathway; L-methionine from L-homocysteine (MetH route): step 1/1. Functionally, catalyzes the transfer of a methyl group from methylcob(III)alamin (MeCbl) to homocysteine, yielding enzyme-bound cob(I)alamin and methionine in the cytosol. MeCbl is an active form of cobalamin (vitamin B12) used as a cofactor for methionine biosynthesis. Cob(I)alamin form is regenerated to MeCbl by a transfer of a methyl group from 5-methyltetrahydrofolate. The processing of cobalamin in the cytosol occurs in a multiprotein complex composed of at least MMACHC, MMADHC, MTRR (methionine synthase reductase) and MTR which may contribute to shuttle safely and efficiently cobalamin towards MTR in order to produce methionine. The polypeptide is Methionine synthase (Mus musculus (Mouse)).